We begin with the raw amino-acid sequence, 134 residues long: DNA-binding protein inhibitor ID-2 (134 aa).

Residues Ser-14 and Ser-25 each carry the phosphoserine modification. In terms of domain architecture, bHLH spans 23-75; that stretch reads SRSKTPVDDPMSLLYNMNDCYSKLKELVPSIPQNKKVTKMEILQHVIDYILDL. The tract at residues 30–83 is interaction with IFI204; it reads DDPMSLLYNMNDCYSKLKELVPSIPQNKKVTKMEILQHVIDYILDLQIALDSHP. Positions 106-115 match the Nuclear export signal motif; that stretch reads LNTDISILSL.

In terms of assembly, interacts with GATA4 and NKX2-5. Interacts with NR0B2. Interacts with CLOCK and BMAL1. Interacts with IFI204. Interacts with NEDD9/HEF1. Interacts with ASB4; this interaction promotes ID2 proteasomal degradation. In terms of processing, polyubiquitinated; which is favored by Ifi204 and leads to proteasomal degradation. Ubiquitinated in a ASB4-depedent manner, leading to proteasomal degradation. Post-translationally, phosphorylated in vitro by CDK1, PKA and PKC.

It localises to the cytoplasm. Its subcellular location is the nucleus. Its function is as follows. Transcriptional regulator (lacking a basic DNA binding domain) which negatively regulates the basic helix-loop-helix (bHLH) transcription factors by forming heterodimers and inhibiting their DNA binding and transcriptional activity. Implicated in regulating a variety of cellular processes, including cellular growth, senescence, differentiation, apoptosis, angiogenesis, and neoplastic transformation. Inhibits skeletal muscle and cardiac myocyte differentiation. Regulates the circadian clock by repressing the transcriptional activator activity of the CLOCK-BMAL1 heterodimer. Restricts the CLOCK and BMAL1 localization to the cytoplasm. Plays a role in both the input and output pathways of the circadian clock: in the input component, is involved in modulating the magnitude of photic entrainment and in the output component, contributes to the regulation of a variety of liver clock-controlled genes involved in lipid metabolism. In Mus musculus (Mouse), this protein is DNA-binding protein inhibitor ID-2 (Id2).